Reading from the N-terminus, the 299-residue chain is uncharacterized protein (299 aa).

This is an uncharacterized protein from Mycobacterium tuberculosis (strain ATCC 25618 / H37Rv).